The chain runs to 1246 residues: Putative helicase L115 (1246 aa).

Residues 1–21 form a disordered region; it reads MSKTITKKVNKKTKKSTKINP. Positions 872 to 1030 constitute a Helicase ATP-binding domain; sequence AKFTDGYHGF…YYMLKMLQTG (159 aa). 885–892 is a binding site for ATP; sequence SDVGSGKT.

The protein is Putative helicase L115 of Acanthamoeba polyphaga (Amoeba).